A 109-amino-acid polypeptide reads, in one-letter code: MMLGKKLHVKKNDTVIVITGKDKAKTGKVLQILPKKDGVLVEGINIVKRHTRPRGSEAGAIVEKEAVIHVSNVMIYCNKCGKPVRTRINTLEDGKKVRICVKCGEAFDK.

Belongs to the universal ribosomal protein uL24 family. In terms of assembly, part of the 50S ribosomal subunit.

One of two assembly initiator proteins, it binds directly to the 5'-end of the 23S rRNA, where it nucleates assembly of the 50S subunit. In terms of biological role, one of the proteins that surrounds the polypeptide exit tunnel on the outside of the subunit. This is Large ribosomal subunit protein uL24 from Geotalea uraniireducens (strain Rf4) (Geobacter uraniireducens).